Here is a 1383-residue protein sequence, read N- to C-terminus: Cell surface hyaluronidase CEMIP2 (1383 aa).

The tract at residues 1–50 (MYATDSRGHSPAFLQPQNGNSRHPSGYVPGKVVPLRPPPPPKSQASAKFT) is disordered. Over 1–82 (MYATDSRGHS…SQKQKRHKNT (82 aa)) the chain is Cytoplasmic. Phosphoserine is present on residues serine 10 and serine 63. Residues 83–103 (FICFAITSFSFFIALAIILGI) traverse the membrane as a helical; Signal-anchor for type II membrane protein segment. Residues 104–1383 (SSKYAPDENC…ELLKQASKAH (1280 aa)) lie on the Extracellular side of the membrane. The 125-residue stretch at 121–245 (RNWDPGQDSA…RKASWTLLAR (125 aa)) folds into the G8 domain. N-linked (GlcNAc...) asparagine glycans are attached at residues asparagine 248 and asparagine 292. The region spanning 255 to 412 (GSYTFEKDFS…VSLSGFRVEV (158 aa)) is the GG-type lectin 1 domain. PbH1 repeat units follow at residues 669-691 (HPNN…WYLF), 711-733 (TPLG…FIDK), and 791-812 (GGDI…TFAS). N-linked (GlcNAc...) asparagine glycosylation is found at asparagine 914 and asparagine 1234. Positions 1208 to 1366 (KSYLPVQFQS…LDEYGCPRAT (159 aa)) constitute a GG-type lectin 2 domain.

This sequence belongs to the CEMIP family. In terms of tissue distribution, widely expressed.

The protein localises to the cell membrane. It catalyses the reaction Random hydrolysis of (1-&gt;4)-linkages between N-acetyl-beta-D-glucosamine and D-glucuronate residues in hyaluronate.. Cell surface hyaluronidase that mediates the initial cleavage of extracellular high-molecular-weight hyaluronan into intermediate-size hyaluronan of approximately 10-5 kDa fragments. Very specific to hyaluronan; not able to cleave chondroitin sulfate or dermatan sulfate. Has an essential function in systemic hyaluronan catabolism and turnover and regulates cell adhesion and migration via hyaluronan degradation at focal adhesion sites. Acts as a regulator of angiogenesis and heart morphogenesis by mediating degradation of extracellular hyaluronan, thereby regulating VEGF signaling. This chain is Cell surface hyaluronidase CEMIP2, found in Homo sapiens (Human).